Reading from the N-terminus, the 329-residue chain is Palmitoyltransferase pfa3 (329 aa).

A run of 5 helical transmembrane segments spans residues 14 to 34, 49 to 69, 141 to 161, 177 to 197, and 243 to 263; these read VLVI…MSGV, VGII…LTNL, FFFL…YSTF, AIYL…SIVM, and IMGK…GEGV. Residues 97–147 enclose the DHHC domain; it reads RFCEKCQEYKCDRSHHCSQCNKCILRMDHHCMWFKNCVGFRNHKFFFLECF.

It belongs to the DHHC palmitoyltransferase family. PFA3 subfamily. Post-translationally, autopalmitoylated.

It is found in the vacuole membrane. The protein resides in the golgi apparatus membrane. It catalyses the reaction L-cysteinyl-[protein] + hexadecanoyl-CoA = S-hexadecanoyl-L-cysteinyl-[protein] + CoA. Its function is as follows. Palmitoyltransferase specific for VAC8. Palmitoylates VAC8 at one or more of its N-terminal cysteine residues, which is required for its proper membrane localization. The chain is Palmitoyltransferase pfa3 (pfa3) from Schizosaccharomyces pombe (strain 972 / ATCC 24843) (Fission yeast).